The primary structure comprises 400 residues: Elongation factor Tu (400 aa).

Residues 10–210 (KPHCNVGTIG…VDTYIPIPPR (201 aa)) form the tr-type G domain. A G1 region spans residues 19 to 26 (GHVDHGKT). GTP is bound at residue 19 to 26 (GHVDHGKT). Threonine 26 is a binding site for Mg(2+). The G2 stretch occupies residues 60–64 (GLTIA). The tract at residues 81-84 (DCPG) is G3. GTP contacts are provided by residues 81–85 (DCPGH) and 136–139 (NKCD). Positions 136-139 (NKCD) are G4. Residues 174 to 176 (SAI) are G5.

This sequence belongs to the TRAFAC class translation factor GTPase superfamily. Classic translation factor GTPase family. EF-Tu/EF-1A subfamily. Monomer.

The protein resides in the cytoplasm. It carries out the reaction GTP + H2O = GDP + phosphate + H(+). In terms of biological role, GTP hydrolase that promotes the GTP-dependent binding of aminoacyl-tRNA to the A-site of ribosomes during protein biosynthesis. The protein is Elongation factor Tu of Dehalococcoides mccartyi (strain CBDB1).